A 209-amino-acid chain; its full sequence is Outer-membrane lipoprotein LolB (209 aa).

Positions 1–17 (MATVFSRALGALVLGVA) are cleaved as a signal peptide. Cys18 carries the N-palmitoyl cysteine lipid modification. Residue Cys18 is the site of S-diacylglycerol cysteine attachment.

The protein belongs to the LolB family. As to quaternary structure, monomer.

It localises to the cell outer membrane. In terms of biological role, plays a critical role in the incorporation of lipoproteins in the outer membrane after they are released by the LolA protein. In Ralstonia nicotianae (strain ATCC BAA-1114 / GMI1000) (Ralstonia solanacearum), this protein is Outer-membrane lipoprotein LolB.